A 228-amino-acid chain; its full sequence is Prolactin-2B1 (228 aa).

The first 31 residues, 1-31 (MLLSLTQMLSSRASSRLFLVSYLLLWENVVS), serve as a signal peptide directing secretion. 2 disulfide bridges follow: Cys-89/Cys-194 and Cys-203/Cys-228.

This sequence belongs to the somatotropin/prolactin family. In terms of tissue distribution, expressed specifically in placenta. Expressed at high levels in trophoblast cells from both junctional and labyrinth zones of the chorioallantoic placenta the last week of gestation.

It is found in the secreted. The protein is Prolactin-2B1 (Prl2b1) of Mus musculus (Mouse).